A 472-amino-acid chain; its full sequence is PEP-dependent dihydroxyacetone kinase, phosphoryl donor subunit DhaM (472 aa).

The PTS EIIA type-4 domain maps to Met-1–Leu-135. Residue His-9 is the Tele-phosphohistidine intermediate of the active site. An HPr domain is found at Ala-155–Thr-242. Residue His-169 is the Pros-phosphohistidine intermediate of the active site. Positions Gln-264 to Gly-472 are PTS EI-like, N-terminal part. Residue His-430 is the Tele-phosphohistidine intermediate of the active site.

Belongs to the PEP-utilizing enzyme family. Homodimer. The dihydroxyacetone kinase complex is composed of a homodimer of DhaM, a homodimer of DhaK and the subunit DhaL.

It catalyses the reaction dihydroxyacetone + phosphoenolpyruvate = dihydroxyacetone phosphate + pyruvate. The protein operates within polyol metabolism; glycerol degradation. Its function is as follows. Component of the dihydroxyacetone kinase complex, which is responsible for the phosphoenolpyruvate (PEP)-dependent phosphorylation of dihydroxyacetone. DhaM serves as the phosphoryl donor. Is phosphorylated by phosphoenolpyruvate in an EI- and HPr-dependent reaction, and a phosphorelay system on histidine residues finally leads to phosphoryl transfer to DhaL and dihydroxyacetone. In Escherichia coli (strain K12), this protein is PEP-dependent dihydroxyacetone kinase, phosphoryl donor subunit DhaM.